The primary structure comprises 807 residues: Probable dimethyl sulfoxide reductase chain YnfF (807 aa).

The tat-type signal signal peptide spans 1 to 45 (MKIHTTEALMKAEISRRSLMKTSALGSLALASSAFTLPFSQMVRA). Positions 52-113 (EKAVWSSCTV…SIRRRMNHPD (62 aa)) constitute a 4Fe-4S Mo/W bis-MGD-type domain. 4 residues coordinate [4Fe-4S] cluster: cysteine 59, cysteine 63, cysteine 67, and cysteine 99. Mo-bis(molybdopterin guanine dinucleotide) is bound at residue serine 195.

It belongs to the prokaryotic molybdopterin-containing oxidoreductase family. As to quaternary structure, the complex consists of three subunits: YnfF, the reductase; YnfG, an electron transfer protein, and YnfH, a membrane anchor protein. It depends on [4Fe-4S] cluster as a cofactor. Mo-bis(molybdopterin guanine dinucleotide) serves as cofactor. Post-translationally, exported by the Tat system. The position of the signal peptide cleavage has not been experimentally proven. Can also be exported by the Sec system.

It localises to the cell membrane. Terminal reductase during anaerobic growth on various sulfoxide and N-oxide compounds. The chain is Probable dimethyl sulfoxide reductase chain YnfF (ynfF) from Escherichia coli (strain K12).